A 1224-amino-acid chain; its full sequence is WD repeat-containing protein 11 (1224 aa).

WD repeat units lie at residues 59–108 (KHKA…AQCE) and 111–154 (EHAK…KLWK). Phosphoserine occurs at positions 205 and 209. One copy of the WD 3 repeat lies at 354 to 393 (KTVRPFSMVCCPVNENAAALVVSDGRVMIWELKSAVCNRN). Ser-402 and Ser-406 each carry phosphoserine. WD repeat units lie at residues 471 to 510 (RMCP…LHKE), 566 to 605 (NDES…LLRE), 708 to 745 (GSMG…SRGI), 747 to 787 (THRS…MVSS), 793 to 831 (NVTF…ACFR), and 893 to 940 (SLSN…HSLS).

As to quaternary structure, component of the complex WDR11 composed of C17orf75, FAM91A1 and WDR11; FAM91A1 and WDR11 are required for proper location of the complex. Interacts (via the N-terminal and the central portion of the protein) with EMX1. Interacts with GLI3; the interaction associateS EMX1 with GLI3. Interacts with TBC1D23; this interaction may be indirect and recruits TBC1D23 to AP-1-derived vesicles. In terms of tissue distribution, ubiquitous.

The protein localises to the cytoplasm. It localises to the cytoskeleton. The protein resides in the cilium basal body. It is found in the nucleus. Its subcellular location is the cilium axoneme. The protein localises to the cytoplasmic vesicle. It localises to the golgi apparatus. The protein resides in the trans-Golgi network. In terms of biological role, involved in the Hedgehog (Hh) signaling pathway, is essential for normal ciliogenesis. Regulates the proteolytic processing of GLI3 and cooperates with the transcription factor EMX1 in the induction of downstream Hh pathway gene expression and gonadotropin-releasing hormone production. WDR11 complex facilitates the tethering of Adaptor protein-1 complex (AP-1)-derived vesicles. WDR11 complex acts together with TBC1D23 to facilitate the golgin-mediated capture of vesicles generated using AP-1. This Homo sapiens (Human) protein is WD repeat-containing protein 11 (WDR11).